Reading from the N-terminus, the 436-residue chain is Enolase 1 (436 aa).

Ser40 is a binding site for Mg(2+). Cys147 and Cys169 are oxidised to a cystine. 2 residues coordinate (2R)-2-phosphoglycerate: Gln164 and Glu208. The Proton donor role is filled by Glu208. Mg(2+)-binding residues include Asp243, Glu296, and Asp322. Residue Asp322 coordinates (2R)-2-phosphoglycerate. Lys347 (proton acceptor) is an active-site residue. (2R)-2-phosphoglycerate is bound by residues Arg376 and Ser377.

It belongs to the enolase family. In terms of assembly, homodimer. Homotetramer. Interacts with methyltransferase METH; the interaction inhibits METH catalytic activity; 2-phosphoglycerate binding to ENO prevents the interaction with METH. Requires Mg(2+) as cofactor.

The protein localises to the cytoplasm. Its subcellular location is the nucleus. It carries out the reaction (2R)-2-phosphoglycerate = phosphoenolpyruvate + H2O. It participates in carbohydrate degradation; glycolysis; pyruvate from D-glyceraldehyde 3-phosphate: step 4/5. Glycolytic enzyme that catalyzes the conversion of 2-phosphoglycerate to phosphoenolpyruvate. Inhibits tRNA methyltransferase METH catalytic activity in the absence of 2-phosphoglycerate. The sequence is that of Enolase 1 from Entamoeba histolytica (strain ATCC 30459 / HM-1:IMSS / ABRM).